The sequence spans 105 residues: Cell division protein FtsL (105 aa).

Residues 1 to 24 (MAEKMEKTGQILQMQLKRFSRVEK) are Cytoplasmic-facing. A helical transmembrane segment spans residues 25–45 (AFYFSIAVTTLIVAISIIFMQ). Residues 46–105 (TKLLQVQNDLTKINAQIEEKKTELDDAKQEVNELLRAERLKEIANSHDLQLNNENIRIAE) lie on the Extracellular side of the membrane.

Belongs to the FtsL family.

It is found in the cell membrane. Essential cell division protein. This is Cell division protein FtsL from Streptococcus pneumoniae (strain ATCC BAA-255 / R6).